The sequence spans 363 residues: Chorismate synthase (363 aa).

Arg-48 serves as a coordination point for NADP(+). Residues 125–127 (RSS), 238–239 (NA), Gly-278, 293–297 (KPTAS), and Arg-319 each bind FMN.

Belongs to the chorismate synthase family. In terms of assembly, homotetramer. The cofactor is FMNH2.

The enzyme catalyses 5-O-(1-carboxyvinyl)-3-phosphoshikimate = chorismate + phosphate. Its pathway is metabolic intermediate biosynthesis; chorismate biosynthesis; chorismate from D-erythrose 4-phosphate and phosphoenolpyruvate: step 7/7. Functionally, catalyzes the anti-1,4-elimination of the C-3 phosphate and the C-6 proR hydrogen from 5-enolpyruvylshikimate-3-phosphate (EPSP) to yield chorismate, which is the branch point compound that serves as the starting substrate for the three terminal pathways of aromatic amino acid biosynthesis. This reaction introduces a second double bond into the aromatic ring system. The protein is Chorismate synthase of Acinetobacter baumannii (strain ACICU).